Consider the following 951-residue polypeptide: Metal transporter CNNM1 (951 aa).

The helical transmembrane segment at 23–43 threads the bilayer; sequence AVLLLFFSLSPRPPAAAAWLL. Residues 114–138 form a disordered region; it reads GAGGAAPSAVPTRPPGPQRCREQSD. The CNNM transmembrane domain occupies 218–414; sequence LLPPAWLRAL…DPYSDLVKEE (197 aa). The next 3 membrane-spanning stretches (helical) occupy residues 222-242, 282-302, and 319-339; these read AWLR…FSGL, LLCT…GWLY, and AGVH…FLGA. 2 consecutive CBS domains span residues 433–495 and 502–568; these read LTPL…CTPL and YNRP…ILDE. Polar residues-rich tracts occupy residues 731–740 and 814–824; these read SRCSGLNRSE and KAPTTRGTPQT. 2 disordered regions span residues 731–754 and 795–830; these read SRCS…GSNT and MDSS…DDPV. Thr-821 and Thr-824 each carry phosphothreonine. Ser-850 is modified (phosphoserine). The interval 903-951 is disordered; that stretch reads DPEASPCSSDSEENMGKKLLRTLSGRKRKKSADGERASEENSNLTPLIT. The span at 920–932 shows a compositional bias: basic residues; it reads KLLRTLSGRKRKK. Residues 942 to 951 show a composition bias toward polar residues; it reads ENSNLTPLIT.

The protein belongs to the ACDP family. In terms of tissue distribution, predominantly expressed in brain and testis, and, at lower levels, in kidney. In the brain, expressed in hippocampal neurons (at protein level).

Its subcellular location is the cell membrane. Its function is as follows. Probable metal transporter. The polypeptide is Metal transporter CNNM1 (Cnnm1) (Mus musculus (Mouse)).